Reading from the N-terminus, the 65-residue chain is Neuropeptide-like protein 28 (65 aa).

The signal sequence occupies residues 1–22 (MISTSSILILVFLLACFMATSA). Residues Y29, Y39, Y47, and Y55 each carry the tyrosine amide modification. W63 is modified (tryptophan amide).

This sequence belongs to the YARP (YGGW-amide related peptide) family.

The protein resides in the secreted. Its function is as follows. May have antimicrobial activity. This Caenorhabditis elegans protein is Neuropeptide-like protein 28 (nlp-28).